Here is a 248-residue protein sequence, read N- to C-terminus: Ribonuclease PH (248 aa).

Residues Arg86 and Gly124–Arg126 each bind phosphate.

The protein belongs to the RNase PH family. Homohexameric ring arranged as a trimer of dimers.

The enzyme catalyses tRNA(n+1) + phosphate = tRNA(n) + a ribonucleoside 5'-diphosphate. Its function is as follows. Phosphorolytic 3'-5' exoribonuclease that plays an important role in tRNA 3'-end maturation. Removes nucleotide residues following the 3'-CCA terminus of tRNAs; can also add nucleotides to the ends of RNA molecules by using nucleoside diphosphates as substrates, but this may not be physiologically important. Probably plays a role in initiation of 16S rRNA degradation (leading to ribosome degradation) during starvation. In Listeria welshimeri serovar 6b (strain ATCC 35897 / DSM 20650 / CCUG 15529 / CIP 8149 / NCTC 11857 / SLCC 5334 / V8), this protein is Ribonuclease PH.